The sequence spans 407 residues: 1-deoxy-D-xylulose 5-phosphate reductoisomerase (407 aa).

Residues threonine 25, glycine 26, serine 27, isoleucine 28, asparagine 53, and asparagine 136 each coordinate NADPH. Lysine 137 contributes to the 1-deoxy-D-xylulose 5-phosphate binding site. An NADPH-binding site is contributed by glutamate 138. Position 162 (aspartate 162) interacts with Mn(2+). Serine 163, glutamate 164, serine 188, and histidine 211 together coordinate 1-deoxy-D-xylulose 5-phosphate. Glutamate 164 is a binding site for Mn(2+). Glycine 217 serves as a coordination point for NADPH. Positions 224, 229, 230, and 233 each coordinate 1-deoxy-D-xylulose 5-phosphate. Glutamate 233 contacts Mn(2+).

This sequence belongs to the DXR family. Mg(2+) is required as a cofactor. Requires Mn(2+) as cofactor.

It catalyses the reaction 2-C-methyl-D-erythritol 4-phosphate + NADP(+) = 1-deoxy-D-xylulose 5-phosphate + NADPH + H(+). It functions in the pathway isoprenoid biosynthesis; isopentenyl diphosphate biosynthesis via DXP pathway; isopentenyl diphosphate from 1-deoxy-D-xylulose 5-phosphate: step 1/6. In terms of biological role, catalyzes the NADPH-dependent rearrangement and reduction of 1-deoxy-D-xylulose-5-phosphate (DXP) to 2-C-methyl-D-erythritol 4-phosphate (MEP). This chain is 1-deoxy-D-xylulose 5-phosphate reductoisomerase, found in Bradyrhizobium sp. (strain ORS 278).